The chain runs to 215 residues: Pyrrolidone-carboxylate peptidase (215 aa).

Catalysis depends on residues Glu-81, Cys-144, and His-168.

This sequence belongs to the peptidase C15 family. In terms of assembly, homotetramer.

Its subcellular location is the cytoplasm. The catalysed reaction is Release of an N-terminal pyroglutamyl group from a polypeptide, the second amino acid generally not being Pro.. Removes 5-oxoproline from various penultimate amino acid residues except L-proline. The sequence is that of Pyrrolidone-carboxylate peptidase from Bacillus licheniformis (strain ATCC 14580 / DSM 13 / JCM 2505 / CCUG 7422 / NBRC 12200 / NCIMB 9375 / NCTC 10341 / NRRL NRS-1264 / Gibson 46).